Here is a 238-residue protein sequence, read N- to C-terminus: Carboxymethylenebutenolidase (238 aa).

Catalysis depends on residues Cys-123, Asp-171, and His-201.

The protein belongs to the dienelactone hydrolase family. Monomer.

It carries out the reaction 2-(5-oxo-2,5-dihydrofuran-2-ylidene)acetate + H2O = 4-oxohex-2-enedioate + H(+). The protein operates within aromatic compound metabolism; 3-chlorocatechol degradation. Ring cleavage of cyclic ester dienelactone to produce maleylacetate. The protein is Carboxymethylenebutenolidase (tcbE) of Pseudomonas sp. (strain P51).